A 238-amino-acid polypeptide reads, in one-letter code: MTEVTKNDFTEEGKIVRKIRSFVRREGRLTKGQEGAIQECWPSMGIDFVEQMLDWNEVFGNNNPVVLEIGFGMGASLVEMAKNAPEKNFLGIEVHRPGVGACLAAAKEAGVTNLRVMCHDAVEVFESMIPDSSVNTLQLFFPDPWHKARHHKRRIVKAEFAEMIRPKLIQGGIFHMATDWENYSEHMIEVMNAAPGYENIATDGDFIPRPDERPLTKFEARGHRLGHGVWDIKFRRNA.

Positions 68, 93, 120, and 143 each coordinate S-adenosyl-L-methionine. The active site involves D143. Residues K147, D179, and 216–219 (TKFE) each bind substrate.

Belongs to the class I-like SAM-binding methyltransferase superfamily. TrmB family.

It catalyses the reaction guanosine(46) in tRNA + S-adenosyl-L-methionine = N(7)-methylguanosine(46) in tRNA + S-adenosyl-L-homocysteine. It participates in tRNA modification; N(7)-methylguanine-tRNA biosynthesis. Functionally, catalyzes the formation of N(7)-methylguanine at position 46 (m7G46) in tRNA. The polypeptide is tRNA (guanine-N(7)-)-methyltransferase (Aliivibrio fischeri (strain MJ11) (Vibrio fischeri)).